The chain runs to 429 residues: Glutamate-1-semialdehyde 2,1-aminomutase 1 (429 aa).

Position 268 is an N6-(pyridoxal phosphate)lysine (lysine 268).

This sequence belongs to the class-III pyridoxal-phosphate-dependent aminotransferase family. HemL subfamily. In terms of assembly, homodimer. It depends on pyridoxal 5'-phosphate as a cofactor.

It is found in the cytoplasm. It catalyses the reaction (S)-4-amino-5-oxopentanoate = 5-aminolevulinate. It functions in the pathway porphyrin-containing compound metabolism; protoporphyrin-IX biosynthesis; 5-aminolevulinate from L-glutamyl-tRNA(Glu): step 2/2. This Lysinibacillus sphaericus (strain C3-41) protein is Glutamate-1-semialdehyde 2,1-aminomutase 1.